The sequence spans 136 residues: Large-conductance mechanosensitive channel (136 aa).

2 consecutive transmembrane segments (helical) span residues 10–30 and 76–96; these read FAMR…AAFG and GSFI…FSAV.

The protein belongs to the MscL family. As to quaternary structure, homopentamer.

It is found in the cell inner membrane. In terms of biological role, channel that opens in response to stretch forces in the membrane lipid bilayer. May participate in the regulation of osmotic pressure changes within the cell. The protein is Large-conductance mechanosensitive channel of Yersinia enterocolitica serotype O:8 / biotype 1B (strain NCTC 13174 / 8081).